The sequence spans 170 residues: Probable host range protein 2 (170 aa).

The segment at 145-170 (SDSDSDVDDRAELHKRNNDSDSDDYT) is disordered. Basic and acidic residues predominate over residues 152–163 (DDRAELHKRNND).

The protein belongs to the poxviridae C7 protein family.

In terms of biological role, plays a role for multiplication of the virus in different cell types. This is Probable host range protein 2 from Bos taurus (Bovine).